The following is a 137-amino-acid chain: Nucleoside diphosphate kinase (137 aa).

6 residues coordinate ATP: K9, F57, R85, T91, R102, and N112. Catalysis depends on H115, which acts as the Pros-phosphohistidine intermediate.

It belongs to the NDK family. Homotetramer. Mg(2+) serves as cofactor.

It localises to the cytoplasm. It catalyses the reaction a 2'-deoxyribonucleoside 5'-diphosphate + ATP = a 2'-deoxyribonucleoside 5'-triphosphate + ADP. The catalysed reaction is a ribonucleoside 5'-diphosphate + ATP = a ribonucleoside 5'-triphosphate + ADP. Major role in the synthesis of nucleoside triphosphates other than ATP. The ATP gamma phosphate is transferred to the NDP beta phosphate via a ping-pong mechanism, using a phosphorylated active-site intermediate. The sequence is that of Nucleoside diphosphate kinase from Syntrophotalea carbinolica (strain DSM 2380 / NBRC 103641 / GraBd1) (Pelobacter carbinolicus).